Consider the following 58-residue polypeptide: Large ribosomal subunit protein bL32 (58 aa).

Positions 1-15 (MAVPKKKTSKAKRNQ) are enriched in basic residues. The disordered stretch occupies residues 1 to 23 (MAVPKKKTSKAKRNQRSATWKGK).

The protein belongs to the bacterial ribosomal protein bL32 family.

This chain is Large ribosomal subunit protein bL32, found in Parasynechococcus marenigrum (strain WH8102).